Here is a 136-residue protein sequence, read N- to C-terminus: Large ribosomal subunit protein uL16c (136 aa).

This sequence belongs to the universal ribosomal protein uL16 family. Part of the 50S ribosomal subunit.

The protein resides in the plastid. The protein localises to the chloroplast. The protein is Large ribosomal subunit protein uL16c of Chloranthus spicatus (Chulantree).